The following is a 149-amino-acid chain: D-aminoacyl-tRNA deacylase (149 aa).

The short motif at 137–138 is the Gly-cisPro motif, important for rejection of L-amino acids element; the sequence is GP.

The protein belongs to the DTD family. In terms of assembly, homodimer.

Its subcellular location is the cytoplasm. It catalyses the reaction glycyl-tRNA(Ala) + H2O = tRNA(Ala) + glycine + H(+). The catalysed reaction is a D-aminoacyl-tRNA + H2O = a tRNA + a D-alpha-amino acid + H(+). In terms of biological role, an aminoacyl-tRNA editing enzyme that deacylates mischarged D-aminoacyl-tRNAs. Also deacylates mischarged glycyl-tRNA(Ala), protecting cells against glycine mischarging by AlaRS. Acts via tRNA-based rather than protein-based catalysis; rejects L-amino acids rather than detecting D-amino acids in the active site. By recycling D-aminoacyl-tRNA to D-amino acids and free tRNA molecules, this enzyme counteracts the toxicity associated with the formation of D-aminoacyl-tRNA entities in vivo and helps enforce protein L-homochirality. In Syntrophobacter fumaroxidans (strain DSM 10017 / MPOB), this protein is D-aminoacyl-tRNA deacylase.